Here is a 361-residue protein sequence, read N- to C-terminus: Alanine racemase (361 aa).

The active-site Proton acceptor; specific for D-alanine is the K34. K34 bears the N6-(pyridoxal phosphate)lysine mark. A substrate-binding site is contributed by R129. The Proton acceptor; specific for L-alanine role is filled by Y256. Residue M304 coordinates substrate.

The protein belongs to the alanine racemase family. Pyridoxal 5'-phosphate is required as a cofactor.

It carries out the reaction L-alanine = D-alanine. Its pathway is amino-acid biosynthesis; D-alanine biosynthesis; D-alanine from L-alanine: step 1/1. Catalyzes the interconversion of L-alanine and D-alanine. May also act on other amino acids. This is Alanine racemase (alr) from Corynebacterium glutamicum (strain R).